The following is a 1328-amino-acid chain: ABC transporter C family member 7 (1328 aa).

An ABC transmembrane type-1 1 domain is found at 104–389 (HKTSIIVQIF…LPQAIQRLLS (286 aa)). A run of 6 helical transmembrane segments spans residues 112-132 (IFSA…ILYV), 140-160 (SFLV…FLSI), 224-244 (LILL…CWTI), 245-265 (GYSG…STFL), 287-307 (ISEM…LFFI), and 333-353 (MVVQ…YTLI). Residues 457–678 (IELVNNDSIE…FDFESIMKTK (222 aa)) enclose the ABC transporter 1 domain. ATP is bound at residue 490–497 (GVVGSGKS). Residues 684-695 (LNNSNNNNNNNN) show a composition bias toward low complexity. A disordered region spans residues 684-708 (LNNSNNNNNNNNNKEEEEDVENLEK). 5 helical membrane passes run 762 to 782 (FIFF…FLLF), 802 to 822 (DSFY…FLGI), 894 to 914 (VLMM…LALF), 988 to 1008 (IGIK…FFSL), and 1014 to 1034 (GLSV…NWCI). The region spanning 765-1046 (FFTMIMMYII…YIEFSMKMSS (282 aa)) is the ABC transmembrane type-1 2 domain. Positions 1083-1316 (IQFKNVEIKY…INNQNSKFKK (234 aa)) constitute an ABC transporter 2 domain. 1117–1124 (GKSGSGKS) contacts ATP.

It belongs to the ABC transporter superfamily. ABCC family. Conjugate transporter (TC 3.A.1.208) subfamily.

The protein localises to the membrane. In Dictyostelium discoideum (Social amoeba), this protein is ABC transporter C family member 7 (abcC7).